Reading from the N-terminus, the 436-residue chain is UDP-N-acetylmuramate--L-alanine ligase (436 aa).

An ATP-binding site is contributed by G108 to S114.

The protein belongs to the MurCDEF family.

It localises to the cytoplasm. The catalysed reaction is UDP-N-acetyl-alpha-D-muramate + L-alanine + ATP = UDP-N-acetyl-alpha-D-muramoyl-L-alanine + ADP + phosphate + H(+). It functions in the pathway cell wall biogenesis; peptidoglycan biosynthesis. In terms of biological role, cell wall formation. In Bacillus cereus (strain ZK / E33L), this protein is UDP-N-acetylmuramate--L-alanine ligase.